A 201-amino-acid chain; its full sequence is Ribonuclease MRP protein subunit RMP1 (201 aa).

A helical transmembrane segment spans residues 86-108 (YWQFNGVIALGQFVTLGCTLVTL).

As to quaternary structure, component of RNase MRP complex which consists of an RNA moiety and at least 10 protein subunits including POP1, POP3, POP4, POP5, POP6, POP7, POP8, RMP1, RPP1 and SNM1, many of which are shared with the RNase P complex.

The protein localises to the membrane. Its subcellular location is the cytoplasm. The protein resides in the nucleus. In terms of biological role, functions as part of ribonuclease MRP (RNase MRP), which is involved in rRNA processing in mitochondria. This is Ribonuclease MRP protein subunit RMP1 from Saccharomyces cerevisiae (strain ATCC 204508 / S288c) (Baker's yeast).